Consider the following 577-residue polypeptide: Arginine--tRNA ligase (577 aa).

Positions 122-132 (PNVAKEMHVGH) match the 'HIGH' region motif.

This sequence belongs to the class-I aminoacyl-tRNA synthetase family. Monomer.

The protein resides in the cytoplasm. The catalysed reaction is tRNA(Arg) + L-arginine + ATP = L-arginyl-tRNA(Arg) + AMP + diphosphate. This Escherichia coli O6:K15:H31 (strain 536 / UPEC) protein is Arginine--tRNA ligase.